Reading from the N-terminus, the 104-residue chain is Larval cuticle protein 65Ab1 (104 aa).

An N-terminal signal peptide occupies residues 1–18; that stretch reads MKFLIVFVALFAMAVARP. The Chitin-binding type R&amp;R domain occupies 32–102; the sequence is PEKWSSDVET…PQGAHLPVAP (71 aa).

Component of the cuticle of the larva. The protein is Larval cuticle protein 65Ab1 of Drosophila melanogaster (Fruit fly).